A 466-amino-acid polypeptide reads, in one-letter code: Rho GTPase-activating protein 1 (466 aa).

2 disordered regions span residues 1–31 (MTEV…SLSY) and 65–84 (EEQD…DDGG). Residues 8 to 31 (PSSPSASHSSSSSSSSPSPSSLSY) show a composition bias toward low complexity. Basic and acidic residues predominate over residues 65–74 (EEQDLRRRSS). Residues 117 to 130 (IGWPTNVRHVAHVT) form the CRIB domain. Residues 162 to 342 (VSTESMQLSY…TLIEKTLRER (181 aa)) form the Rho-GAP domain. A disordered region spans residues 354 to 402 (PLEPSDESGHQSPSQSLAFNTSEQSEETQSDNIENAENQSSSSEISDEL). Composition is skewed to polar residues over residues 363–376 (HQSP…NTSE) and 383–397 (SDNI…SSSE).

Acts as a GTPase activator for the Rac-type GTPase by converting it to an inactive GDP-bound state. The sequence is that of Rho GTPase-activating protein 1 (ROPGAP1) from Arabidopsis thaliana (Mouse-ear cress).